The chain runs to 436 residues: Glutamyl-tRNA reductase (436 aa).

Residues 49-52 (TCNR), S109, 114-116 (EGQ), and Q120 contribute to the substrate site. Catalysis depends on C50, which acts as the Nucleophile. 198 to 203 (GAGRMS) is an NADP(+) binding site.

Belongs to the glutamyl-tRNA reductase family. In terms of assembly, homodimer.

The enzyme catalyses (S)-4-amino-5-oxopentanoate + tRNA(Glu) + NADP(+) = L-glutamyl-tRNA(Glu) + NADPH + H(+). The protein operates within porphyrin-containing compound metabolism; protoporphyrin-IX biosynthesis; 5-aminolevulinate from L-glutamyl-tRNA(Glu): step 1/2. It functions in the pathway porphyrin-containing compound metabolism; chlorophyll biosynthesis. Functionally, catalyzes the NADPH-dependent reduction of glutamyl-tRNA(Glu) to glutamate 1-semialdehyde (GSA). This chain is Glutamyl-tRNA reductase, found in Prochlorococcus marinus (strain MIT 9303).